Reading from the N-terminus, the 151-residue chain is MIIMDVSVQRRMAAEILKCGIERVWIDPTQLDRVKMAMSKDDIRALIKEGVIKKKQKKGISSARVKKLKEQRKKGRRRGPGSRRGAAGARTPPKERWMATIRALRKTLKQLRDSGKIDRKVYRKLYRMAKGGAFRSRSHLFLYMREHELLK.

Residues 57 to 81 (KKGISSARVKKLKEQRKKGRRRGPG) show a composition bias toward basic residues. Positions 57-95 (KKGISSARVKKLKEQRKKGRRRGPGSRRGAAGARTPPKE) are disordered.

Belongs to the eukaryotic ribosomal protein eL19 family. As to quaternary structure, part of the 50S ribosomal subunit.

Its function is as follows. Binds to the 23S rRNA. The sequence is that of Large ribosomal subunit protein eL19 from Methanocaldococcus jannaschii (strain ATCC 43067 / DSM 2661 / JAL-1 / JCM 10045 / NBRC 100440) (Methanococcus jannaschii).